The primary structure comprises 438 residues: MGELKEILKQRYHELLDWNVKAPHVPLSQRLKHFTWSWFACTMATGGVGLIIGSFPFRFYGLNTIGKIVYILQIFLFSLFGSCMLFRFIKYPSTIKDSWNHHLEKLFIATCLLSISTFIDMLAIYAYPDTGEWMVWVIRILYYIYVAVSFIYCVMAFFTIFNNHVYTIETASPAWILPIFPPMICGVIAGAVNSTQPAHQLKNMVIFGILFQGLGFWVYLLLFAVNVLRFFTVGLAKPQDRPGMFMFVGPPAFSGLALINIARGAMGSRPYIFVGANSSEYLGFVSTFMAIFIWGLAAWCYCLAMVSFLAGFFTRAPLKFACGWFAFIFPNVGFVNCTIEIGKMIDSKAFQMFGHIIGVILCIQWILLMYLMVRAFLVNDLCYPGKDEDAHPPPKPNTGVLNPTFPPEKAPASLEKVDTHVTSTGGESDPPSSEHESV.

Transmembrane regions (helical) follow at residues 37-57, 65-85, 106-126, 140-160, 172-192, 205-225, 242-262, 288-308, 321-341, and 353-373; these read SWFA…SFPF, IGKI…SCML, LFIA…AIYA, ILYY…FFTI, SPAW…AGAV, VIFG…LFAV, PGMF…INIA, FMAI…MVSF, ACGW…TIEI, and FGHI…YLMV. Positions 390 to 438 are disordered; the sequence is AHPPPKPNTGVLNPTFPPEKAPASLEKVDTHVTSTGGESDPPSSEHESV. S413, S423, S428, S432, S433, and S437 each carry phosphoserine.

The protein belongs to the tellurite-resistance/dicarboxylate transporter (TDT) family.

The protein localises to the membrane. In terms of biological role, permease for malate and other C4 dicarboxylic acids. This chain is Malic acid transport protein (mae1), found in Schizosaccharomyces pombe (strain 972 / ATCC 24843) (Fission yeast).